Reading from the N-terminus, the 113-residue chain is B-type lectin plumieribetin (113 aa).

A Bulb-type lectin domain is found at asparagine 1 to asparagine 109.

As to quaternary structure, homotetramer. Interacts with alpha-1-beta-1 integrin (ITGA1/ITGB1). Not glycosylated. Not N-glycosylated and not O-glycosylated with the mostcommon O-linked glycoconjugates. In terms of processing, the N-terminus is blocked. Expressed by sting venom glands and is also found in skin mucus. Not found in other tissues tested.

The protein localises to the secreted. May contribute to some of the local and systemic effects of envenomation by the scorpionfish. Preferentially recognizes mannose-containing carbohydrate structures, but its interaction with single mannose residues is weak. Potently inhibits alpha-1-beta-1 integrin (ITGA1/ITGB1) binding to basement membrane collagen IV in a divalent cation-independent manner. In addition, moderately inhibits both laminin binding integrins alpha-3-beta-1 (ITGA3/ITGB1) and alpha-7-beta-1 (ITGA7/ITGB1). Weakens the cell-collagen contacts, reduces cell spreading, and alters the actin cytoskeleton, after the compensating alpha-2-beta-1 integrin is blocked. On the cellular level, fails to completely detach hepatocarcinoma HepG2 cells and primary arterial smooth muscle cells from the collagen IV fragment CB3. This chain is B-type lectin plumieribetin, found in Scorpaena plumieri (Spotted scorpionfish).